A 118-amino-acid polypeptide reads, in one-letter code: UPF0148 protein M1627_1409 (118 aa).

Belongs to the UPF0148 family.

This chain is UPF0148 protein M1627_1409, found in Saccharolobus islandicus (strain M.16.27) (Sulfolobus islandicus).